The following is a 156-amino-acid chain: Endogenous retrovirus group K member 113 Pro protein (156 aa).

A Peptidase A2 domain is found at 21–96 (FEGLVDTGAD…IPLNLWGRDL (76 aa)). D26 is a catalytic residue. A G-patch domain is found at 111–156 (YSPTSQKIMTKMGYIPGKGLGKNEDGIKIPVEAKINQKREGIGYPF).

Belongs to the peptidase A2 family. HERV class-II K(HML-2) subfamily. In terms of assembly, active as a homodimer. In terms of processing, autoproteolytically processed at the N-terminus. Expected C-terminal autoprocessing not detected. The sequence shown is that of the processed Pro protein.

The catalysed reaction is Processing at the authentic HIV-1 PR recognition site and release of the mature p17 matrix and the p24 capsid protein, as a result of the cleavage of the -SQNY-|-PIVQ- cleavage site.. Retroviral proteases have roles in the processing of the primary translation products and the maturation of the viral particle. Endogenous Pro proteins may have kept, lost or modified their original function during evolution. This chain is Endogenous retrovirus group K member 113 Pro protein (HERVK_113), found in Homo sapiens (Human).